The following is a 602-amino-acid chain: uncharacterized protein (602 aa).

It belongs to the IIV-6 098R family.

This is an uncharacterized protein from Acheta domesticus (House cricket).